A 153-amino-acid polypeptide reads, in one-letter code: Ribosome maturation factor RimP (153 aa).

Belongs to the RimP family.

It is found in the cytoplasm. Functionally, required for maturation of 30S ribosomal subunits. This is Ribosome maturation factor RimP from Coxiella burnetii (strain Dugway 5J108-111).